Here is a 197-residue protein sequence, read N- to C-terminus: Isopentenyl-diphosphate Delta-isomerase (197 aa).

Residues His-41 and His-48 each contribute to the Mn(2+) site. The Nudix hydrolase domain occupies 46 to 183 (QLHRAFSVFL…AWFMTVLDAA (138 aa)). Cys-83 is an active-site residue. His-85 is a binding site for Mn(2+). Mg(2+) is bound at residue Glu-103. Mn(2+) contacts are provided by Glu-130 and Glu-132. Residue Glu-132 is part of the active site.

Belongs to the IPP isomerase type 1 family. Requires Mg(2+) as cofactor. Mn(2+) is required as a cofactor.

It is found in the cytoplasm. It catalyses the reaction isopentenyl diphosphate = dimethylallyl diphosphate. It functions in the pathway isoprenoid biosynthesis; dimethylallyl diphosphate biosynthesis; dimethylallyl diphosphate from isopentenyl diphosphate: step 1/1. In terms of biological role, catalyzes the 1,3-allylic rearrangement of the homoallylic substrate isopentenyl (IPP) to its highly electrophilic allylic isomer, dimethylallyl diphosphate (DMAPP). The chain is Isopentenyl-diphosphate Delta-isomerase from Streptomyces griseus subsp. griseus (strain JCM 4626 / CBS 651.72 / NBRC 13350 / KCC S-0626 / ISP 5235).